The chain runs to 637 residues: Probable ATP-binding protein YheS (637 aa).

2 consecutive ABC transporter domains span residues 2 to 246 and 313 to 527; these read IVFS…AQQQ and LKME…KQEN. ATP-binding positions include 34–41 and 345–352; these read GKNGCGKS and GRNGAGKS. Residues 523–559 form a disordered region; that stretch reads QKQENQTDEAPKENANSAQARKDQKRREAELRAQTQP. Positions 542-553 are enriched in basic and acidic residues; the sequence is ARKDQKRREAEL.

This sequence belongs to the ABC transporter superfamily. ABCF family. YheS subfamily.

In terms of biological role, genetic data indicate it may be involved in ribosome assembly or function. This chain is Probable ATP-binding protein YheS (yheS), found in Escherichia coli O157:H7.